The chain runs to 860 residues: Leucine--tRNA ligase (860 aa).

Positions 42–52 (PYPSGRLHMGH) match the 'HIGH' region motif. Residues 619–623 (KMSKS) carry the 'KMSKS' region motif. Position 622 (K622) interacts with ATP.

Belongs to the class-I aminoacyl-tRNA synthetase family.

The protein localises to the cytoplasm. It catalyses the reaction tRNA(Leu) + L-leucine + ATP = L-leucyl-tRNA(Leu) + AMP + diphosphate. The protein is Leucine--tRNA ligase of Escherichia coli (strain SMS-3-5 / SECEC).